A 202-amino-acid chain; its full sequence is Lipid A acyltransferase PagP (202 aa).

An N-terminal signal peptide occupies residues 1–25; it reads MNYKDIINACILSGVFLLHSPSALA. Active-site residues include histidine 74, aspartate 117, and serine 118.

It belongs to the lipid A palmitoyltransferase family. In terms of assembly, homodimer.

The protein resides in the cell outer membrane. It carries out the reaction a lipid A + a 1,2-diacyl-sn-glycero-3-phosphocholine = a hepta-acyl lipid A + a 2-acyl-sn-glycero-3-phosphocholine. The enzyme catalyses a lipid IVA + a 1,2-diacyl-sn-glycero-3-phosphocholine = a lipid IVB + a 2-acyl-sn-glycero-3-phosphocholine. It catalyses the reaction a lipid IIA + a 1,2-diacyl-sn-glycero-3-phosphocholine = a lipid IIB + a 2-acyl-sn-glycero-3-phosphocholine. Its function is as follows. Transfers a fatty acid residue from the sn-1 position of a phospholipid to the N-linked hydroxyfatty acid chain on the proximal unit of lipid A or its precursors. This chain is Lipid A acyltransferase PagP, found in Yersinia pseudotuberculosis serotype IB (strain PB1/+).